We begin with the raw amino-acid sequence, 359 residues long: Pyruvate dehydrogenase E1 component subunit beta, mitochondrial (359 aa).

The transit peptide at 1-30 (MAVVAGLVRGPLRQASGLLKRRFHRSAPAA) directs the protein to the mitochondrion. Tyr-67 is modified (phosphotyrosine). Glu-89 is a binding site for thiamine diphosphate. Residues Ile-142, Ala-190, Ile-191, Asp-193, and Asn-195 each coordinate K(+). An N6-acetyllysine modification is found at Lys-354.

As to quaternary structure, heterotetramer of two PDHA1 and two PDHB subunits. The heterotetramer interacts with DLAT, and is part of the multimeric pyruvate dehydrogenase complex that contains multiple copies of pyruvate dehydrogenase (E1), dihydrolipoamide acetyltransferase (DLAT, E2) and lipoamide dehydrogenase (DLD, E3). These subunits are bound to an inner core composed of about 48 DLAT and 12 PDHX molecules. Interacts with DLAT. Requires thiamine diphosphate as cofactor.

The protein resides in the mitochondrion matrix. It catalyses the reaction N(6)-[(R)-lipoyl]-L-lysyl-[protein] + pyruvate + H(+) = N(6)-[(R)-S(8)-acetyldihydrolipoyl]-L-lysyl-[protein] + CO2. In terms of biological role, the pyruvate dehydrogenase complex catalyzes the overall conversion of pyruvate to acetyl-CoA and CO(2), and thereby links the glycolytic pathway to the tricarboxylic cycle. The sequence is that of Pyruvate dehydrogenase E1 component subunit beta, mitochondrial (Pdhb) from Mus musculus (Mouse).